Consider the following 362-residue polypeptide: GTPase Obg (362 aa).

In terms of domain architecture, Obg spans methionine 1–isoleucine 159. Residues alanine 160–valine 327 enclose the OBG-type G domain. Residues glycine 166 to serine 173, phenylalanine 191 to histidine 195, aspartate 212 to glycine 215, serine 279 to aspartate 282, and serine 308 to valine 310 each bind GTP. The Mg(2+) site is built by serine 173 and threonine 193. Residues glutamate 332 to proline 362 are disordered. Acidic residues predominate over residues valine 348 to proline 362.

This sequence belongs to the TRAFAC class OBG-HflX-like GTPase superfamily. OBG GTPase family. In terms of assembly, monomer. It depends on Mg(2+) as a cofactor.

Its subcellular location is the cytoplasm. Functionally, an essential GTPase which binds GTP, GDP and possibly (p)ppGpp with moderate affinity, with high nucleotide exchange rates and a fairly low GTP hydrolysis rate. Plays a role in control of the cell cycle, stress response, ribosome biogenesis and in those bacteria that undergo differentiation, in morphogenesis control. This is GTPase Obg from Rhizobium etli (strain CIAT 652).